The sequence spans 1463 residues: Collagen alpha-1(III) chain (1463 aa).

An N-terminal signal peptide occupies residues 1–23; it reads MMSFVQCGTWFLLTLLHPSLILA. The propeptide at 24–154 is N-terminal propeptide; it reads QQSNVDELGC…CPTGGQNYSP (131 aa). The 60-residue stretch at 31-90 folds into the VWFC domain; it reads LGCNYLGQSYESRDVWKPEPCQICVCDSGSVLCDDIMCDDEPLDCPNPEIPFGECCAICP. The interval 97-1195 is disordered; the sequence is PVIPDGNRPQ…PGPPGAPGPC (1099 aa). Polar residues predominate over residues 147 to 156; it reads TGGQNYSPQF. Residues 155–169 are nonhelical region (N-terminal); that stretch reads QFDSYDVKSGVGGMG. Residues 164 to 173 are compositionally biased toward gly residues; the sequence is GVGGMGGYPG. The tract at residues 170-1195 is triple-helical region; it reads GYPGPAGPPG…PGPPGAPGPC (1026 aa). Over residues 174–184 the composition is skewed to pro residues; that stretch reads PAGPPGPPGPP. Over residues 186 to 198 the composition is skewed to low complexity; that stretch reads SSGHPGSPGSPGY. A compositionally biased stretch (basic and acidic residues) spans 228-240; that stretch reads KDGESGRPGRPGE. Low complexity predominate over residues 250 to 259; that stretch reads KGPAGIPGFP. Lys262 is subject to 5-hydroxylysine; alternate. O-linked (Gal...) hydroxylysine; alternate glycosylation is present at Lys262. The segment covering 265 to 276 has biased composition (basic and acidic residues); sequence RGFDGRNGEKGE. Lys283 is modified (5-hydroxylysine). Composition is skewed to low complexity over residues 310 to 321 and 354 to 379; these read PGLPGAAGARGN and PAGS…AGAQ. The span at 389 to 398 shows a compositional bias: gly residues; it reads GSPGGKGEMG. Low complexity-rich tracts occupy residues 399 to 429 and 481 to 502; these read PAGI…QRGP and PGER…PGEK. The span at 527 to 548 shows a compositional bias: gly residues; it reads GTPGGPGIRGMPGSPGGPGNDG. Composition is skewed to low complexity over residues 606–615 and 637–652; these read PAGKNGETGP and QGLQ…PGEN. Over residues 668-677 the composition is skewed to gly residues; the sequence is GVPGGKGDSG. Residues 678–691 are compositionally biased toward low complexity; that stretch reads APGERGPPGTAGTP. Residues 692–708 show a composition bias toward gly residues; the sequence is GLRGGAGPPGPEGGKGP. Residues 709 to 718 show a composition bias toward pro residues; it reads AGPPGPPGTS. Residues 822 to 834 are compositionally biased toward basic and acidic residues; sequence AKGERGAPGEKGE. A compositionally biased stretch (gly residues) spans 835 to 849; sequence GGPPGAAGPPGGSGP. Lys859 is modified (5-hydroxylysine). Gly residues predominate over residues 863–879; that stretch reads GSPGGPGAAGFPGGRGL. Pro residues predominate over residues 889-906; that stretch reads PGPPGPSGAPGKDGPPGP. Composition is skewed to low complexity over residues 907 to 934 and 945 to 960; these read AGNS…KGPP and PLGI…LAGP. A 5-hydroxylysine modification is found at Lys976. The segment covering 1045-1054 has biased composition (pro residues); the sequence is PGHPGPPGPV. Low complexity predominate over residues 1068-1084; sequence PAGPSGAPGPAGARGAP. A 5-hydroxylysine mark is found at Lys1093 and Lys1105. Residues 1120–1132 show a composition bias toward low complexity; that stretch reads PGAAGHQGAVGSP. Pro residues predominate over residues 1180–1192; it reads PGQPGPPGPPGAP. Residues 1219 to 1463 constitute a propeptide, C-terminal propeptide; it reads DDPMDFKINT…GVDIGPVCFL (245 aa). In terms of domain architecture, Fibrillar collagen NC1 spans 1229–1463; sequence EEIMSSLKSV…GVDIGPVCFL (235 aa). Cystine bridges form between Cys1259-Cys1291, Cys1299-Cys1461, and Cys1369-Cys1414. Asp1277, Asn1279, Gln1280, Cys1282, and Asp1285 together coordinate Ca(2+).

This sequence belongs to the fibrillar collagen family. In terms of assembly, trimers of identical alpha 1(III) chains. The chains are linked to each other by interchain disulfide bonds. Trimers are also cross-linked via hydroxylysines. Interacts with ADGRG1. Post-translationally, O-glycosylated. In terms of processing, prolines at the third position of the tripeptide repeating unit (G-X-Y) are hydroxylated in some or all of the chains.

It localises to the secreted. It is found in the extracellular space. Its subcellular location is the extracellular matrix. Functionally, collagen type III occurs in most soft connective tissues along with type I collagen. Involved in regulation of cortical development. Is the major ligand of ADGRG1 in the developing brain and binding to ADGRG1 inhibits neuronal migration and activates the RhoA pathway by coupling ADGRG1 to GNA13 and possibly GNA12. In Rattus norvegicus (Rat), this protein is Collagen alpha-1(III) chain (Col3a1).